Reading from the N-terminus, the 144-residue chain is MEMNEITVDNETMAHIAIFEKIARIELMECVENEDMILFVVGEHKMAEMFRKNKEVISQLKEKINKHILVAEVSRDLLTFVRNIFFRYGVNEIQISWKNNRTDIVVGVKPEEIGKVIGKEGKNIKLFKDAVSRYFNVNSISVKQ.

One can recognise a KH domain in the interval 101 to 144 (RTDIVVGVKPEEIGKVIGKEGKNIKLFKDAVSRYFNVNSISVKQ).

This sequence belongs to the NusA family.

The protein localises to the cytoplasm. Participates in transcription termination. This is Probable transcription termination protein NusA from Thermoplasma acidophilum (strain ATCC 25905 / DSM 1728 / JCM 9062 / NBRC 15155 / AMRC-C165).